A 387-amino-acid polypeptide reads, in one-letter code: Na(+)/H(+)-K(+) antiporter GerN (387 aa).

11 helical membrane-spanning segments follow: residues 29-49 (PSVLGKLIVGIVIGPAVLGWI), 54-74 (LLTQLSNVGVILLMFMAGLET), 87-107 (LAVALGGIILPFVGGYVSGLV), 114-134 (NAVFLGLLLCATSVSISVQTL), 149-169 (LGAAVFDDILVVILLAFAMSF), 175-195 (VNLTMVILKKVVFFASIILIG), 219-239 (ALIICFSFAYFGELLGIAGII), 263-283 (PIAYAMFVPVFFVSIGMNITF), 290-310 (IWFILALTVIAVLTKLIGCGF), 324-344 (IIGAGMVSRGEVALIIAGTGL), and 347-367 (GLLAQDYFTAIVIVVILTTMI).

This sequence belongs to the monovalent cation:proton antiporter 2 (CPA2) transporter (TC 2.A.37) family.

It is found in the membrane. Na(+)/H(+) antiporter that extrudes sodium in exchange for external protons. Can also use potassium as a coupling ion, without completely replacing H(+). This Na(+)/H(+)-K(+) antiport is much more rapid than Na(+)/H(+) antiport. Can also extrude lithium. Important for the inosine-dependent germination of spores. The chain is Na(+)/H(+)-K(+) antiporter GerN (gerN) from Bacillus cereus.